Consider the following 366-residue polypeptide: Aminomethyltransferase (366 aa).

This sequence belongs to the GcvT family. The glycine cleavage system is composed of four proteins: P, T, L and H.

It catalyses the reaction N(6)-[(R)-S(8)-aminomethyldihydrolipoyl]-L-lysyl-[protein] + (6S)-5,6,7,8-tetrahydrofolate = N(6)-[(R)-dihydrolipoyl]-L-lysyl-[protein] + (6R)-5,10-methylene-5,6,7,8-tetrahydrofolate + NH4(+). Functionally, the glycine cleavage system catalyzes the degradation of glycine. This is Aminomethyltransferase from Bordetella parapertussis (strain 12822 / ATCC BAA-587 / NCTC 13253).